We begin with the raw amino-acid sequence, 495 residues long: UDP-N-acetylmuramoyl-L-alanyl-D-glutamate--2,6-diaminopimelate ligase (495 aa).

UDP-N-acetyl-alpha-D-muramoyl-L-alanyl-D-glutamate is bound by residues Leu27, Ser29, and 44–46 (HQA). Residue 116–122 (GTNGKTT) coordinates ATP. UDP-N-acetyl-alpha-D-muramoyl-L-alanyl-D-glutamate-binding positions include Asn157, 158-159 (TT), Ser185, Gln191, and Arg193. Lys225 carries the post-translational modification N6-carboxylysine. Residues Arg390, 414–417 (DNPR), Gly465, and Glu469 each bind meso-2,6-diaminopimelate. The short motif at 414–417 (DNPR) is the Meso-diaminopimelate recognition motif element.

Belongs to the MurCDEF family. MurE subfamily. Requires Mg(2+) as cofactor. Carboxylation is probably crucial for Mg(2+) binding and, consequently, for the gamma-phosphate positioning of ATP.

It localises to the cytoplasm. It carries out the reaction UDP-N-acetyl-alpha-D-muramoyl-L-alanyl-D-glutamate + meso-2,6-diaminopimelate + ATP = UDP-N-acetyl-alpha-D-muramoyl-L-alanyl-gamma-D-glutamyl-meso-2,6-diaminopimelate + ADP + phosphate + H(+). It functions in the pathway cell wall biogenesis; peptidoglycan biosynthesis. Catalyzes the addition of meso-diaminopimelic acid to the nucleotide precursor UDP-N-acetylmuramoyl-L-alanyl-D-glutamate (UMAG) in the biosynthesis of bacterial cell-wall peptidoglycan. This chain is UDP-N-acetylmuramoyl-L-alanyl-D-glutamate--2,6-diaminopimelate ligase, found in Salmonella typhimurium (strain LT2 / SGSC1412 / ATCC 700720).